Consider the following 344-residue polypeptide: Serpentine receptor class alpha-27 (344 aa).

The next 7 helical transmembrane spans lie at 28-48 (SIWMKINFVFVFILIFLTFYL), 67-87 (QILLMITLLNANLNQLIFLEI), 128-148 (GLLSALTFDRFFALYASTVYV), 157-177 (MLITVSIIVTVIVHIRTYGGV), 203-223 (AIFWIIMANCVLTIAVLLLNI), 252-272 (ICSVTSTQFVFLSFSTAALAI), and 287-307 (INIQYINGGVYGNLSIPVLIY).

Belongs to the nematode receptor-like protein sra family.

It localises to the membrane. This is Serpentine receptor class alpha-27 (sra-27) from Caenorhabditis elegans.